The primary structure comprises 396 residues: Pre-mRNA-splicing regulator WTAP (396 aa).

Residue methionine 1 is modified to N-acetylmethionine. Phosphoserine is present on serine 14. 2 stretches are compositionally biased toward low complexity: residues 240–257 and 278–291; these read QQQQ…TTSS and SNGS…SGSG. A disordered region spans residues 240–396; the sequence is QQQQSQASAP…SSVNVQGAVL (157 aa). Residues serine 297, serine 305, serine 306, and serine 341 each carry the phosphoserine modification. Positions 305 to 316 are enriched in low complexity; it reads SSSGNGNKASNS. A compositionally biased stretch (polar residues) spans 340 to 351; that stretch reads DSPTGSENSLTH. At threonine 350 the chain carries Phosphothreonine. The segment covering 352-368 has biased composition (basic and acidic residues); sequence HSNDTDSSHDPQEEKAV. A compositionally biased stretch (polar residues) spans 380 to 396; sequence HVQNGLDSSVNVQGAVL. Residue serine 388 is modified to Phosphoserine.

This sequence belongs to the fl(2)d family. As to quaternary structure, component of the WMM complex, a N6-methyltransferase complex composed of a catalytic subcomplex, named MAC, and of an associated subcomplex, named MACOM. The MAC subcomplex is composed of METTL3 and METTL14. The MACOM subcomplex is composed of WTAP, ZC3H13, CBLL1/HAKAI, VIRMA, and, in some cases of RBM15 (RBM15 or RBM15B). Interacts with WT1. Also a component of a MACOM-like complex, named WTAP complex, composed of WTAP, ZC3H13, CBLL1, VIRMA, RBM15, BCLAF1 and THRAP3. Interacts with CPNE4 (via VWFA domain).

It is found in the nucleus speckle. The protein localises to the nucleus. It localises to the nucleoplasm. Its subcellular location is the cytoplasm. Associated component of the WMM complex, a complex that mediates N6-methyladenosine (m6A) methylation of RNAs, a modification that plays a role in the efficiency of mRNA splicing and RNA processing. Acts as a key regulator of m6A methylation by promoting m6A methylation of mRNAs at the 3'-UTR. Required for accumulation of METTL3 and METTL14 to nuclear speckle. Acts as a mRNA splicing regulator. Regulates G2/M cell-cycle transition by binding to the 3' UTR of CCNA2, which enhances its stability. Impairs WT1 DNA-binding ability and inhibits expression of WT1 target genes. The sequence is that of Pre-mRNA-splicing regulator WTAP from Mus musculus (Mouse).